A 494-amino-acid chain; its full sequence is Cysteine--tRNA ligase (494 aa).

Zn(2+) is bound at residue cysteine 29. The 'HIGH' region signature appears at leucine 31–histidine 41. A disordered region spans residues lysine 187 to glycine 220. Positions alanine 196–arginine 211 are enriched in basic and acidic residues. The Zn(2+) site is built by cysteine 230, histidine 255, and glutamate 259. Residues lysine 287–serine 291 carry the 'KMSKS' region motif.

This sequence belongs to the class-I aminoacyl-tRNA synthetase family. Zn(2+) is required as a cofactor.

The protein localises to the cytoplasm. The catalysed reaction is tRNA(Cys) + L-cysteine + ATP = L-cysteinyl-tRNA(Cys) + AMP + diphosphate. This chain is Cysteine--tRNA ligase, found in Halobacterium salinarum (strain ATCC 700922 / JCM 11081 / NRC-1) (Halobacterium halobium).